The following is a 106-amino-acid chain: MSATSEMLAEINEVNLSYLLLAQRLLREDKAMGMFRMGISEELADVLVNLTLAQTVKLAASNQMLCRFRFDDHALLSSLADKGRSSAVSHAHSAILMAGQPVESLR.

It belongs to the FlhD family. Homodimer; disulfide-linked. Forms a heterohexamer composed of two FlhC and four FlhD subunits. Each FlhC binds a FlhD dimer, forming a heterotrimer, and a hexamer assembles by dimerization of two heterotrimers.

It localises to the cytoplasm. Functions in complex with FlhC as a master transcriptional regulator that regulates transcription of several flagellar and non-flagellar operons by binding to their promoter region. Activates expression of class 2 flagellar genes, including fliA, which is a flagellum-specific sigma factor that turns on the class 3 genes. Also regulates genes whose products function in a variety of physiological pathways. This is Flagellar transcriptional regulator FlhD from Burkholderia mallei (strain SAVP1).